The following is a 311-amino-acid chain: Ribosomal RNA small subunit methyltransferase H (311 aa).

Residues 39-41 (GGH), Asp59, Phe81, Asp102, and His109 contribute to the S-adenosyl-L-methionine site.

It belongs to the methyltransferase superfamily. RsmH family.

It localises to the cytoplasm. It carries out the reaction cytidine(1402) in 16S rRNA + S-adenosyl-L-methionine = N(4)-methylcytidine(1402) in 16S rRNA + S-adenosyl-L-homocysteine + H(+). Functionally, specifically methylates the N4 position of cytidine in position 1402 (C1402) of 16S rRNA. This is Ribosomal RNA small subunit methyltransferase H from Porphyromonas gingivalis (strain ATCC BAA-308 / W83).